Here is a 558-residue protein sequence, read N- to C-terminus: Membrane protein insertase YidC (558 aa).

The next 6 helical transmembrane spans lie at 5–25 (IINL…WQYF), 332–352 (AIDF…MNFF), 355–375 (YVGN…LLMF), 429–449 (LPIL…YVTI), 474–494 (LFGL…WPIL), and 520–540 (FMPL…LIYW).

The protein belongs to the OXA1/ALB3/YidC family. Type 1 subfamily. In terms of assembly, interacts with the Sec translocase complex via SecD. Specifically interacts with transmembrane segments of nascent integral membrane proteins during membrane integration.

The protein localises to the cell inner membrane. Its function is as follows. Required for the insertion and/or proper folding and/or complex formation of integral membrane proteins into the membrane. Involved in integration of membrane proteins that insert both dependently and independently of the Sec translocase complex, as well as at least some lipoproteins. Aids folding of multispanning membrane proteins. The sequence is that of Membrane protein insertase YidC from Rickettsia typhi (strain ATCC VR-144 / Wilmington).